Reading from the N-terminus, the 768-residue chain is MFLNNQNFENRSSRSSSNINSSETIVDLKNPQIIYKIRLESVNNDNLLNLDLDKSESHTGGEQHLELSSPPKLDKKSKNFNKIHDLVDSKKNKNRQRKKIKTKIHIDDDDDNFRDSNSNVSQTAGDLAISLMRPPKPKVEVVKKLTSNKKSIRQKKVAVTPSQNSASIQSNSPPESISITNPLTIQELSKLICVQETDIIKYLFLKRISVTMNQTIDASIISSVADNFGIAVESNVKENNNGLSSNLDNSNAFYETGNYIKRPPIVTVMGHVDHGKTTLLDYIRKSNNANKEIGGITQAIAAYEVEYIKKDNKQKIVFLDTPGHEAFTSMRSRGANLTDVAIIIIAADDGVKPQTIEAINHIQKANVPFVIAISKIDKAGSNTDIIEQDLLKYNVMSEKLGGQVPIIPISSLTGQNVDKLLETITLLAELEDLKADPTQPAQGIIIEAHLDKSHGPVATLLIQNGTLNISDNLVIGSAYAKIRVIINNAKEKINLAIPSSVVEIWGLSSVPATGEIALAVKSDKEAKLKAIENTSKDSSIIQKQRALNSRITLDTLKNTNSKDISKQISLIIKTDNQGSTEAILDSLSQFPQSKVQLNVVSIMPGEITATDVELASTTNSTLIGFNTNFAPGTKQASAKSNILIENYQIIYALIEDIKRRMEDLLDPEYSEVPVGEAEVSTVFSLANRKIAGCRVINNKLLKNSWIKVIREEKVIYQGKIESLKRVREDVEEIQAGNECGIFISEFQLWQSGDKIHSFDLIPKQKSLF.

3 disordered regions span residues 1 to 20 (MFLN…SNIN), 54 to 77 (KSES…DKKS), and 155 to 176 (KKVA…PPES). Over residues 54-65 (KSESHTGGEQHL) the composition is skewed to basic and acidic residues. The segment covering 160 to 176 (TPSQNSASIQSNSPPES) has biased composition (polar residues). Residues 261–434 (KRPPIVTVMG…TLLAELEDLK (174 aa)) enclose the tr-type G domain. GTP contacts are provided by residues 270–277 (GHVDHGKT), 320–324 (DTPGH), and 374–377 (SKID).

This sequence belongs to the TRAFAC class translation factor GTPase superfamily. Classic translation factor GTPase family. IF-2 subfamily.

It is found in the plastid. It localises to the chloroplast. Functionally, one of the essential components for the initiation of protein synthesis. Protects formylmethionyl-tRNA from spontaneous hydrolysis and promotes its binding to the 30S ribosomal subunits. Also involved in the hydrolysis of GTP during the formation of the 70S ribosomal complex. The sequence is that of Translation initiation factor IF-2, chloroplastic (infB) from Pyropia yezoensis (Susabi-nori).